Reading from the N-terminus, the 194-residue chain is Protein GrpE (194 aa).

Belongs to the GrpE family. As to quaternary structure, homodimer.

It is found in the cytoplasm. Functionally, participates actively in the response to hyperosmotic and heat shock by preventing the aggregation of stress-denatured proteins, in association with DnaK and GrpE. It is the nucleotide exchange factor for DnaK and may function as a thermosensor. Unfolded proteins bind initially to DnaJ; upon interaction with the DnaJ-bound protein, DnaK hydrolyzes its bound ATP, resulting in the formation of a stable complex. GrpE releases ADP from DnaK; ATP binding to DnaK triggers the release of the substrate protein, thus completing the reaction cycle. Several rounds of ATP-dependent interactions between DnaJ, DnaK and GrpE are required for fully efficient folding. The chain is Protein GrpE from Aliivibrio salmonicida (strain LFI1238) (Vibrio salmonicida (strain LFI1238)).